We begin with the raw amino-acid sequence, 407 residues long: MKFVDEVSIRVKAGDGGNGCMSFRREKFIENGGPNGGDGGDGGSIFMMADENLNTLVDYRYTRHFDAERGSNGGSTDCTGKKGEDLILRVPVGTTVIDSATQEVIGDLTKAGQKLMVVQGGWHGLGNTRFKSSTNRAPRQTTPGKPGEQRDLKLEMKVLADVGLLGLPNAGKSTFIRSVSAAKPKVADYPFTTLVPNLGVVSVDRWKSFVIADIPGLIEGASDGAGLGIRFLKHLARTRLLLHLVDMAPLDESSAPDAAEVIVNELIKFSPSLAERDRWLVLNKCDQILEEEHEARVKEIVDRLEWTGPVYVISAIAKEGTERLTRDIMRYLEDRADRLANDPAYKEELADLDQRIEDEARAQLQALDDKRALRRSGVKSVHDIGDDDWDEEDVDDEDGPEIIYVRD.

The 159-residue stretch at 1–159 (MKFVDEVSIR…RDLKLEMKVL (159 aa)) folds into the Obg domain. The segment at 128–148 (TRFKSSTNRAPRQTTPGKPGE) is disordered. Residues 129-143 (RFKSSTNRAPRQTTP) show a composition bias toward polar residues. The OBG-type G domain occupies 160 to 333 (ADVGLLGLPN…LTRDIMRYLE (174 aa)). GTP is bound by residues 166–173 (GLPNAGKS), 191–195 (FTTLV), 213–216 (DIPG), 283–286 (NKCD), and 314–316 (SAI). Positions 173 and 193 each coordinate Mg(2+). The tract at residues 376 to 407 (SGVKSVHDIGDDDWDEEDVDDEDGPEIIYVRD) is disordered. Positions 385 to 400 (GDDDWDEEDVDDEDGP) are enriched in acidic residues.

Belongs to the TRAFAC class OBG-HflX-like GTPase superfamily. OBG GTPase family. As to quaternary structure, monomer. The cofactor is Mg(2+).

Its subcellular location is the cytoplasm. In terms of biological role, an essential GTPase which binds GTP, GDP and possibly (p)ppGpp with moderate affinity, with high nucleotide exchange rates and a fairly low GTP hydrolysis rate. Plays a role in control of the cell cycle, stress response, ribosome biogenesis and in those bacteria that undergo differentiation, in morphogenesis control. The protein is GTPase Obg of Pseudomonas fluorescens (strain Pf0-1).